The following is a 351-amino-acid chain: Photosystem II D2 protein (351 aa).

The helical transmembrane segment at 39–59 (TAYLAVGGWMTGTTFVTSWYT) threads the bilayer. Histidine 116 contributes to the chlorophyll a binding site. The helical transmembrane segment at 123–139 (GFCLRQFEIARLVGIRP) threads the bilayer. Glutamine 128 and asparagine 141 together coordinate pheophytin a. The chain crosses the membrane as a helical span at residues 151–164 (VFVSVFLLYPLGQA). Histidine 196 is a binding site for chlorophyll a. A helical transmembrane segment spans residues 206-226 (GALLCAIHGATVENTLFEDGD). Histidine 213 and phenylalanine 260 together coordinate a plastoquinone. A Fe cation-binding site is contributed by histidine 213. A Fe cation-binding site is contributed by histidine 267. A helical membrane pass occupies residues 277 to 293 (GLWTSAIGIVGLALNLR).

This sequence belongs to the reaction center PufL/M/PsbA/D family. In terms of assembly, PSII is composed of 1 copy each of membrane proteins PsbA, PsbB, PsbC, PsbD, PsbE, PsbF, PsbH, PsbI, PsbJ, PsbK, PsbL, PsbM, PsbT, PsbX, PsbY, PsbZ, Psb30/Ycf12, at least 3 peripheral proteins of the oxygen-evolving complex and a large number of cofactors. It forms dimeric complexes. The cofactor is The D1/D2 heterodimer binds P680, chlorophylls that are the primary electron donor of PSII, and subsequent electron acceptors. It shares a non-heme iron and each subunit binds pheophytin, quinone, additional chlorophylls, carotenoids and lipids. There is also a Cl(-1) ion associated with D1 and D2, which is required for oxygen evolution. The PSII complex binds additional chlorophylls, carotenoids and specific lipids..

It localises to the plastid. The protein resides in the chloroplast thylakoid membrane. It catalyses the reaction 2 a plastoquinone + 4 hnu + 2 H2O = 2 a plastoquinol + O2. In terms of biological role, photosystem II (PSII) is a light-driven water:plastoquinone oxidoreductase that uses light energy to abstract electrons from H(2)O, generating O(2) and a proton gradient subsequently used for ATP formation. It consists of a core antenna complex that captures photons, and an electron transfer chain that converts photonic excitation into a charge separation. The D1/D2 (PsbA/PsbD) reaction center heterodimer binds P680, the primary electron donor of PSII as well as several subsequent electron acceptors. D2 is needed for assembly of a stable PSII complex. This chain is Photosystem II D2 protein, found in Phaeodactylum tricornutum (strain CCAP 1055/1).